A 91-amino-acid polypeptide reads, in one-letter code: MGRSLKKGPFIADSLLKKVEKQNSNDDRSVIKTWSRASTILPVMIGHTIAVHNGKSHIPVFITEQMVGHKLGEFAPTRTYKGHIKDKKGAR.

Belongs to the universal ribosomal protein uS19 family.

Its function is as follows. Protein S19 forms a complex with S13 that binds strongly to the 16S ribosomal RNA. This is Small ribosomal subunit protein uS19 from Prochlorococcus marinus (strain MIT 9211).